We begin with the raw amino-acid sequence, 292 residues long: Short chain dehydrogenases/reductase notP' (292 aa).

Residues 1 to 25 (MPQTSDGNVHAPQYREAKPSQGDPS) form a disordered region. The NADP(+) site is built by Leu-48, Asp-97, Lys-158, Tyr-193, Lys-197, Ile-230, and Thr-232. Tyr-193 acts as the Proton donor in catalysis. Lys-197 (lowers pKa of active site Tyr) is an active-site residue.

The protein belongs to the short-chain dehydrogenases/reductases (SDR) family.

Functionally, short chain dehydrogenases/reductase; part of the gene cluster that mediates the biosynthesis of notoamide, a fungal indole alkaloid that belongs to a family of natural products containing a characteristic bicyclo[2.2.2]diazaoctane core. The first step of notoamide biosynthesis involves coupling of L-proline and L-tryptophan by the bimodular NRPS notE', to produce cyclo-L-tryptophan-L-proline called brevianamide F. The reverse prenyltransferase notF' then acts as a deoxybrevianamide E synthase and converts brevianamide F to deoxybrevianamide E via reverse prenylation at C-2 of the indole ring leading to the bicyclo[2.2.2]diazaoctane core. Deoxybrevianamide E is further hydroxylated at C-6 of the indole ring, likely catalyzed by the cytochrome P450 monooxygenase notG', to yield 6-hydroxy-deoxybrevianamide E. 6-hydroxy-deoxybrevianamide E is a specific substrate of the prenyltransferase notC' for normal prenylation at C-7 to produce 6-hydroxy-7-prenyl-deoxybrevianamide, also called notoamide S. As the proposed pivotal branching point in notoamide biosynthesis, notoamide S can be diverted to notoamide E through an oxidative pyran ring closure putatively catalyzed by either notH' cytochrome P450 monooxygenase or the notD' FAD-linked oxidoreductase. This step would be followed by an indole 2,3-epoxidation-initiated pinacol-like rearrangement catalyzed by the notB' FAD-dependent monooxygenase leading to the formation of notoamide C and notoamide D. On the other hand notoamide S is converted to notoamide T by notH' (or notD'), a bifunctional oxidase that also functions as the intramolecular Diels-Alderase responsible for generation of (-)-notoamide T. To generate antipodal (+)-notoaminide T, notH (or notD) in Aspergillus strain MF297-2 is expected to catalyze a Diels-Alder reaction leading to the opposite stereochemistry. The remaining oxidoreductase notD' (or notH') likely catalyzes the oxidative pyran ring formation to yield (-)-stephacidin A. The FAD-dependent monooxygenase notI' is highly similar to notB' and is predicted to catalyze a similar conversion from (-)-stephacidin A to (+)-notoamide B via the 2,3-epoxidation of (-)-stephacidin A followed by a pinacol-type rearrangement. Finally, it remains unclear which enzyme could be responsible for the final hydroxylation steps leading to notoamide A and sclerotiamide. The function of notP' in the notoamide biosynthesis has not been determined yet. This chain is Short chain dehydrogenases/reductase notP', found in Aspergillus versicolor.